Reading from the N-terminus, the 340-residue chain is Phenylalanine--tRNA ligase alpha subunit (340 aa).

Glutamate 255 contributes to the Mg(2+) binding site.

It belongs to the class-II aminoacyl-tRNA synthetase family. Phe-tRNA synthetase alpha subunit type 1 subfamily. Tetramer of two alpha and two beta subunits. Requires Mg(2+) as cofactor.

It is found in the cytoplasm. The enzyme catalyses tRNA(Phe) + L-phenylalanine + ATP = L-phenylalanyl-tRNA(Phe) + AMP + diphosphate + H(+). This Moorella thermoacetica (strain ATCC 39073 / JCM 9320) protein is Phenylalanine--tRNA ligase alpha subunit.